We begin with the raw amino-acid sequence, 230 residues long: Cyclin-dependent kinase inhibitor rum1 (230 aa).

3 disordered regions span residues 1 to 25, 43 to 118, and 188 to 230; these read MEPS…SFKG, PESD…DGLY, and SRVP…NLLR. Thr-13 is subject to Phosphothreonine; by MAPK. At Ser-19 the chain carries Phosphoserine; by MAPK. 2 positions are modified to phosphothreonine; by cdc2: Thr-58 and Thr-62. The CDK inhibitory and cyclin-binding stretch occupies residues 67-147; that stretch reads LLPNLMLQDR…TFKPKLLFAD (81 aa). The span at 78-91 shows a compositional bias: basic and acidic residues; the sequence is NSLERCMEEDREHN. Residues 93–102 show a composition bias toward polar residues; that stretch reads FLSSSDNQLL. A required for activity as a cdc2 kinase inhibitor region spans residues 101 to 230; it reads LLSRKKRKPT…KDENRHNLLR (130 aa). Over residues 188–199 the composition is skewed to low complexity; the sequence is SRVPSSSSGSFV. Residues 219–230 are compositionally biased toward basic and acidic residues; that stretch reads NTKDENRHNLLR.

Interacts with cdc13, cig2 and pop1. In terms of processing, phosphorylated by cig1-associated cdc2 which leads to increased stability. Phosphorylation by MAPK reduces cdc2 kinase inhibitor ability.

It is found in the nucleus. Functionally, regulator of cell cycle G1 phase progression. Ensures the correct sequence of S phase and mitosis in the cell by acting as an inhibitor of the cdc2 mitotic kinase. Probably interacts with cdc2 to inhibit its action until the cell mass for Start is reached. Determines the length of the pre-Start G1 period and prevents mitosis from happening in early G1 cells. Required for maintaining pheromone-induced G1 arrest. Acts as an adapter protein since interaction with cdc13 promotes cyclin proteolysis during G1. Becomes a target for degradation at the G1/S phase transition, following phosphorylation by cig1-associated cdc2 at the G1/S phase transition. This chain is Cyclin-dependent kinase inhibitor rum1 (rum1), found in Schizosaccharomyces pombe (strain 972 / ATCC 24843) (Fission yeast).